We begin with the raw amino-acid sequence, 61 residues long: Protein translocase subunit SecE (61 aa).

A helical membrane pass occupies residues 38-58; that stretch reads GIGMILIGLIGLVIRMIGYLI.

It belongs to the SecE/SEC61-gamma family. Component of the Sec protein translocase complex. Heterotrimer consisting of SecY (alpha), SecG (beta) and SecE (gamma) subunits. The heterotrimers can form oligomers, although 1 heterotrimer is thought to be able to translocate proteins. Interacts with the ribosome. May interact with SecDF, and other proteins may be involved.

It is found in the cell membrane. Essential subunit of the Sec protein translocation channel SecYEG. Clamps together the 2 halves of SecY. May contact the channel plug during translocation. This chain is Protein translocase subunit SecE, found in Thermococcus onnurineus (strain NA1).